The following is a 299-amino-acid chain: DNA repair protein RecO (299 aa).

Residues 1–62 (MTLNSDADPD…GRRAPRTPAS (62 aa)) are disordered. Positions 25 to 41 (ASKPARSTRKSSSAKSA) are enriched in low complexity.

The protein belongs to the RecO family.

Involved in DNA repair and RecF pathway recombination. This Paraburkholderia xenovorans (strain LB400) protein is DNA repair protein RecO.